We begin with the raw amino-acid sequence, 721 residues long: 1,4-alpha-glucan branching enzyme GlgB (721 aa).

Asp-400 acts as the Nucleophile in catalysis. The Proton donor role is filled by Glu-453.

Belongs to the glycosyl hydrolase 13 family. GlgB subfamily. Monomer.

The catalysed reaction is Transfers a segment of a (1-&gt;4)-alpha-D-glucan chain to a primary hydroxy group in a similar glucan chain.. Its pathway is glycan biosynthesis; glycogen biosynthesis. Its function is as follows. Catalyzes the formation of the alpha-1,6-glucosidic linkages in glycogen by scission of a 1,4-alpha-linked oligosaccharide from growing alpha-1,4-glucan chains and the subsequent attachment of the oligosaccharide to the alpha-1,6 position. The sequence is that of 1,4-alpha-glucan branching enzyme GlgB from Chlamydia felis (strain Fe/C-56) (Chlamydophila felis).